Reading from the N-terminus, the 61-residue chain is Small ribosomal subunit protein uS14 (61 aa).

Residues Cys-24, Cys-27, Cys-40, and Cys-43 each coordinate Zn(2+).

The protein belongs to the universal ribosomal protein uS14 family. Zinc-binding uS14 subfamily. As to quaternary structure, part of the 30S ribosomal subunit. Contacts proteins S3 and S10. It depends on Zn(2+) as a cofactor.

Binds 16S rRNA, required for the assembly of 30S particles and may also be responsible for determining the conformation of the 16S rRNA at the A site. The protein is Small ribosomal subunit protein uS14 of Sulfurovum sp. (strain NBC37-1).